The chain runs to 703 residues: Calpain-8 (703 aa).

One can recognise a Calpain catalytic domain in the interval 45-344; it reads LFKDPEFPAC…FSRLEICNLS (300 aa). Residues C105, H262, and N286 contribute to the active site. The segment at 355-512 is domain III; sequence KWNLVLFNGR…VFSEKKAQAL (158 aa). The linker stretch occupies residues 513-531; it reads EIGDAVPGDPHEPHPRDMD. EF-hand domains are found at residues 531-566, 575-610, 605-640, and 670-703; these read DGED…LLSK, FNIN…ICKY, LKIC…AGFT, and IRLE…RALV. Residues 532–703 form a domain IV region; that stretch reads GEDEHFWSLS…LAEWLCRALV (172 aa). 9 residues coordinate Ca(2+): D588, D590, T592, S594, E599, D618, S620, T624, and E629.

This sequence belongs to the peptidase C2 family. In terms of assembly, monomer and homooligomer. Interacts with COPS1/GPS1, COPB1, EYA2, NME2, NME4 and TOMM70. The cofactor is Ca(2+). In terms of processing, undergoes autolytic cleavage between Ala-5 and Ala-6 which gives rise to fragments extending from Ala-6 to the C-terminus, Ala-6 to the EF-hand 2 domain and from Ala-6 to the beginning of domain III. As to expression, predominantly expressed in the stomach. Localizes strictly to the surface mucus cells in the gastric epithelium and the mucus-secreting goblet cells in the duodenum.

It is found in the cytoplasm. Its subcellular location is the golgi apparatus. It catalyses the reaction Broad endopeptidase specificity.. With respect to regulation, the concentration of calcium for half-maximal activity is 0.3 mM. Inhibited by calpastatin and calpeptin. Functionally, calcium-regulated non-lysosomal thiol-protease. Involved in membrane trafficking in the gastric surface mucus cells (pit cells) and may involve the membrane trafficking of mucus cells via interactions with coat protein. Proteolytically cleaves the beta-subunit of coatomer complex. The polypeptide is Calpain-8 (Capn8) (Mus musculus (Mouse)).